We begin with the raw amino-acid sequence, 299 residues long: Acetaldehyde dehydrogenase 6 (299 aa).

The Acyl-thioester intermediate role is filled by Cys-125. Residues 156–164 (GAGPGTRAN) and Asn-275 contribute to the NAD(+) site.

It belongs to the acetaldehyde dehydrogenase family.

It catalyses the reaction acetaldehyde + NAD(+) + CoA = acetyl-CoA + NADH + H(+). This chain is Acetaldehyde dehydrogenase 6 (hpdG), found in Rhodococcus jostii (strain RHA1).